Reading from the N-terminus, the 531-residue chain is Ultra-long-chain fatty acid omega-hydroxylase (531 aa).

Residues 1–22 (MLPITDRLLHLLGLEKTAFRIY) lie on the Lumenal side of the membrane. The chain crosses the membrane as a helical span at residues 23 to 43 (AVSTLLLFLLFFLFRLLLRFL). Over 44–531 (RLCRSFYITC…LKVEPLPPRA (488 aa)) the chain is Cytoplasmic. Heme-binding residues include E335 and C475.

This sequence belongs to the cytochrome P450 family. Heme is required as a cofactor.

It localises to the endoplasmic reticulum membrane. It is found in the microsome membrane. It catalyses the reaction triacontanoate + reduced [NADPH--hemoprotein reductase] + O2 = omega-hydroxy-triacontanoate + oxidized [NADPH--hemoprotein reductase] + H2O + H(+). The catalysed reaction is an omega-methyl-ultra-long-chain fatty acid + reduced [NADPH--hemoprotein reductase] + O2 = an omega-hydroxy-ultra-long-chain fatty acid + oxidized [NADPH--hemoprotein reductase] + H2O + H(+). Its function is as follows. A cytochrome P450 monooxygenase involved in epidermal ceramide biosynthesis. Hydroxylates the terminal carbon (omega-hydroxylation) of ultra-long-chain fatty acyls (C28-C36) prior to ceramide synthesis. Contributes to the synthesis of three classes of omega-hydroxy-ultra-long chain fatty acylceramides having sphingosine, 6-hydroxysphingosine and phytosphingosine bases, all major lipid components that underlie the permeability barrier of the stratum corneum. Mechanistically, uses molecular oxygen inserting one oxygen atom into a substrate, and reducing the second into a water molecule, with two electrons provided by NADPH via cytochrome P450 reductase (CPR; NADPH-ferrihemoprotein reductase). The chain is Ultra-long-chain fatty acid omega-hydroxylase from Homo sapiens (Human).